A 545-amino-acid polypeptide reads, in one-letter code: MPVHWVDKLVAELEAKLQNRGKDEYIFNGGLSVSGLQHIGRLRGEVLLGEAVRRELEKRGFRVKQLLTLYTVDPWKGKDEQRREFPDPKAAERYVGWPLDRVPDPKGCHASWVDHFWSDFGPYIGVFTDGKIEVVTTRELYKGRLKEFITTMVLPRRDEIRRVINKYRGRKPYQEGWIPLEPRCARCGRIDSTEALEILGGERVRYRCSYCGYQGESSIEDSKLNWRIEWAGVWWSLGVDFEPYGKDHATPGGSRDSAAELARLLGFEPPEGVWYEWVSLRAGGREADMSSSGFTGITPREWLDIAHPQILRFIYFLHPPTRRVVVDLSEIPSYYSQYYRAERIYFGIEEASTVEETRYLARTYELSHPSNPPAKPPSQIPYSHAAIVAQVVGPERLWTDGLERLKRAGLLGHDEYSIRWAKELLEKAYKWARRYAPKHLKFEIPDSPPEDALRRIEKPDLLEKLAEVLESVEEWSEERIKQALVEFGEGMSSSERRRFYRDFYLAIVGRPEGPRAAPLLSLMDRGFVVDRLRKAANLSRELKGR.

The short motif at 33 to 41 (VSGLQHIGR) is the 'HIGH' region element. Residues 288 to 292 (DMSSS) carry the 'KMSKS' region motif.

This sequence belongs to the class-I aminoacyl-tRNA synthetase family.

It is found in the cytoplasm. It catalyses the reaction tRNA(Lys) + L-lysine + ATP = L-lysyl-tRNA(Lys) + AMP + diphosphate. The chain is Lysine--tRNA ligase (lysS) from Aeropyrum pernix (strain ATCC 700893 / DSM 11879 / JCM 9820 / NBRC 100138 / K1).